A 64-amino-acid chain; its full sequence is Mitotic-spindle organizing protein 1 (64 aa).

This sequence belongs to the MOZART1 family. Part of the gamma-tubulin complex. Interacts directly with alp6/GPC3.

It is found in the cytoplasm. It localises to the cytoskeleton. Its subcellular location is the microtubule organizing center. The protein resides in the spindle pole body. Required for gamma-tubulin complex recruitment to the microtubule organizing center (MTOC). This chain is Mitotic-spindle organizing protein 1 (mzt1), found in Schizosaccharomyces pombe (strain 972 / ATCC 24843) (Fission yeast).